A 256-amino-acid chain; its full sequence is Protein FixA (256 aa).

It belongs to the ETF beta-subunit/FixA family. As to quaternary structure, heterodimer of FixA and FixB.

Its pathway is amine and polyamine metabolism; carnitine metabolism. In terms of biological role, required for anaerobic carnitine reduction. May bring reductant to CaiA. The polypeptide is Protein FixA (Salmonella dublin (strain CT_02021853)).